We begin with the raw amino-acid sequence, 395 residues long: tRNA (guanine-N(7)-)-methyltransferase (395 aa).

3 residues coordinate S-adenosyl-L-methionine: E126, E151, and D178. K204 and D234 together coordinate substrate.

Belongs to the class I-like SAM-binding methyltransferase superfamily. TrmB family.

It catalyses the reaction guanosine(46) in tRNA + S-adenosyl-L-methionine = N(7)-methylguanosine(46) in tRNA + S-adenosyl-L-homocysteine. The protein operates within tRNA modification; N(7)-methylguanine-tRNA biosynthesis. Its function is as follows. Catalyzes the formation of N(7)-methylguanine at position 46 (m7G46) in tRNA. The polypeptide is tRNA (guanine-N(7)-)-methyltransferase (Campylobacter fetus subsp. fetus (strain 82-40)).